Here is a 481-residue protein sequence, read N- to C-terminus: uncharacterized protein (481 aa).

Residues 1 to 18 (MSRLPSKTKYHSSHRSLN) show a composition bias toward basic residues. The disordered stretch occupies residues 1-37 (MSRLPSKTKYHSSHRSLNRKTPLLQRSSETNSLRESG). The segment covering 24-34 (LQRSSETNSLR) has biased composition (polar residues). Transmembrane regions (helical) follow at residues 172 to 191 (SIST…AGAI) and 195 to 214 (AAAG…YLCW).

The protein localises to the membrane. This is an uncharacterized protein from Coxiella burnetii (strain RSA 493 / Nine Mile phase I).